Here is a 524-residue protein sequence, read N- to C-terminus: MDITNRQAVLKNFLGNSPDWYKLAIMGFLIINPLVFFFVSPFVAGWMLVIEFIFTLAMALKCYPLQPGGLLAIQAVAIGMTSPHQVAEEIANNLEVLLLLVFMVAGIYFMKQLLLFVFTKLLLNIRSKTILSLAFCLASAFLSAFLDALTVIAVVISVSVGFYTIYHNVTSNHSDKDITDDSGIDNQDSHETLEQFRAFLRSLMMHAGVGTALGGVMTMVGEPQNLIIAKSAGWNFADFFIRMLPVTLPVFIFGLLVCLLVEKFKLFGYGAQLPERVRQVLTEYDQQASAKRTKQEKMKLIVQAIIGVWLVLALALHLAEVGLVGLSVIILATSFCGITNEHSLGKAFQEALPFTALLTVFFAVVAVIIEQSLFTPIIQFVLQASPSAQLSLFYLFNGLLSSVSDNVFVGTVYINEARSAFEHGIVSLQQFELLAVAINTGTNLPSVATPNGQAAFLFLLTSALAPLIRLSYGRMVYMALPYTLVMTIVGLLGVEFLLVPMTEWLTQAGWISLPHITNGVAIPH.

Transmembrane regions (helical) follow at residues 13–33, 98–118, 140–160, 239–259, 304–324, 325–345, 358–378, 448–468, and 479–499; these read FLGNSPDWYKLAIMGFLIINP, LLLVFMVAGIYFMKQLLLFVF, AFLSAFLDALTVIAVVISVSV, FFIRMLPVTLPVFIFGLLVCL, AIIGVWLVLALALHLAEVGLV, GLSVIILATSFCGITNEHSLG, LTVFFAVVAVIIEQSLFTPII, ATPNGQAAFLFLLTSALAPLI, and ALPYTLVMTIVGLLGVEFLLV.

This sequence belongs to the NhaB Na(+)/H(+) (TC 2.A.34) antiporter family.

The protein resides in the cell inner membrane. It catalyses the reaction 2 Na(+)(in) + 3 H(+)(out) = 2 Na(+)(out) + 3 H(+)(in). Its function is as follows. Na(+)/H(+) antiporter that extrudes sodium in exchange for external protons. This Yersinia pseudotuberculosis serotype I (strain IP32953) protein is Na(+)/H(+) antiporter NhaB.